The chain runs to 270 residues: Protein-ADP-ribose hydrolase (270 aa).

One can recognise a Macro domain in the interval 73-267; that stretch reads VSVKDCQKTN…LYDTYLQKEN (195 aa). Positions 92, 93, and 106 each coordinate ADP-D-ribose. Cys-112, His-117, and Cys-119 together coordinate Zn(2+). ADP-D-ribose contacts are provided by Cys-119, Ile-120, Asp-121, Ser-212, Thr-213, Gly-214, Glu-215, and Phe-216.

This sequence belongs to the MacroD-type family. Zn-Macro subfamily. In terms of assembly, monomer. Interacts with the lipoylated form of GcvH-L. It depends on Zn(2+) as a cofactor.

It catalyses the reaction 4-O-(ADP-D-ribosyl)-L-aspartyl-[protein] + H2O = L-aspartyl-[protein] + ADP-D-ribose + H(+). The catalysed reaction is 5-O-(ADP-D-ribosyl)-L-glutamyl-[protein] + H2O = L-glutamyl-[protein] + ADP-D-ribose + H(+). It carries out the reaction S-(ADP-D-ribosyl)-L-cysteinyl-[protein] + H2O = ADP-D-ribose + L-cysteinyl-[protein]. Its function is as follows. ADP-ribosylhydrolase that specifically reverses the SirTM-mediated mono-ADP-ribosylation at an asparatate residue of GcvH-L (SpyM50867), by releasing ADP-ribose from the target protein. May play a role in the regulation of the response to host-induced oxidative stress. It can also hydrolyze ADP-ribosyl-glutamate bonds and ADP-ribosyl-cysteine bonds. In vitro, it can remove the ADP-ribosyl modification from the human mono-ADP-ribosylated PARP1 E988Q mutant, which is primarily modified on glutamate site with only minor aspartate contribution. It can also hydrolyze the ADP-ribosyl-cysteinyl glycosidic bond of a Cys-ADP-ribosylated synthetic peptide. This Streptococcus pyogenes serotype M5 (strain Manfredo) protein is Protein-ADP-ribose hydrolase.